The sequence spans 343 residues: MKIKALSKLKPEEGIWLTEVEKPEMGHNDLLIRIKKTAICGTDVHIYNWDEWSQKTIPVPMVVGHEYVGEVVGIGQEVRGFEIGDRVSGEGHITCGHCRNCRGGRTHLCRNTTGVGVNRTGAFSEYLVIPAFNAFKIPAGISDDLASIFDPFGNAVHTALSFDLVGEDVLITGAGPIGIMAAAVAKHVGARHVVITDVNEYRLDLAKKMGVTRAVNVMNEKLEDVMSDLGMTEGFDVGLEMSGNPSAFNSMLTNMNHGGKISLLGIPPSDMTVDWNQVIFKGLVIKGIYGREMFETWYKMASLIQSGLDLTPIITHHYKIDDFQKGFDMMRSGMSGKVILDWE.

Residue cysteine 40 coordinates Zn(2+). Catalysis depends on charge relay system residues threonine 42 and histidine 45. Histidine 65, glutamate 66, cysteine 95, cysteine 98, cysteine 101, and cysteine 109 together coordinate Zn(2+). NAD(+) is bound by residues isoleucine 177, aspartate 197, arginine 202, 264–266 (LGI), and 288–289 (IY).

It belongs to the zinc-containing alcohol dehydrogenase family. Homotetramer. It depends on Zn(2+) as a cofactor.

The protein resides in the cytoplasm. It catalyses the reaction L-threonine + NAD(+) = (2S)-2-amino-3-oxobutanoate + NADH + H(+). It participates in amino-acid degradation; L-threonine degradation via oxydo-reductase pathway; glycine from L-threonine: step 1/2. Functionally, catalyzes the NAD(+)-dependent oxidation of L-threonine to 2-amino-3-ketobutyrate. The sequence is that of L-threonine 3-dehydrogenase from Aliivibrio fischeri (strain MJ11) (Vibrio fischeri).